The sequence spans 95 residues: FMRFamide-like neuropeptides 16 (95 aa).

An N-terminal signal peptide occupies residues methionine 1 to alanine 24. A propeptide spanning residues alanine 25–alanine 58 is cleaved from the precursor. Phenylalanine 67, phenylalanine 77, and phenylalanine 87 each carry phenylalanine amide. Residues serine 90–glutamine 95 constitute a propeptide that is removed on maturation.

This sequence belongs to the FARP (FMRFamide related peptide) family.

The protein localises to the secreted. Its function is as follows. FMRFamides and FMRFamide-like peptides are neuropeptides. AQTFVRF-amide inhibits the activity of dissected pharyngeal myogenic muscle system. The chain is FMRFamide-like neuropeptides 16 (flp-16) from Caenorhabditis briggsae.